The sequence spans 3966 residues: Histone-lysine N-methyltransferase 2A (3966 aa).

Disordered regions lie at residues 1 to 106 (MAHS…LLRV) and 130 to 231 (VFGE…GVKI). The short motif at 6 to 25 (RWRFPARPGTTGGGGGGGRR) is the Menin-binding motif (MBM) element. The span at 15 to 29 (TTGGGGGGGRRGLGG) shows a compositional bias: gly residues. Positions 75-102 (GAAAASAASSSSASSSSSSSSSASSGPA) are enriched in low complexity. Residues 121 to 132 (GTNLRRFRAVFG) carry the Integrase domain-binding motif 1 (IBM1) motif. 2 positions are modified to phosphoserine; by CK2: Ser-134 and Ser-140. The Integrase domain-binding motif 2 (IBM2) motif lies at 145 to 150 (QFLGFG). Residue Ser-151 is modified to Phosphoserine. Residues 167–178 (KASPRKPRGRPR) constitute a DNA-binding region (a.T hook 1). At Ser-195 the chain carries Phosphoserine. Positions 200–218 (SETKSADKIKKKDSKSIEK) are enriched in basic and acidic residues. Positions 215–225 (SIEKKRGRPPT) form a DNA-binding region, a.T hook 2. Lys-237 carries the post-translational modification N6-acetyllysine. Positions 299–307 (RRRGRPPST) form a DNA-binding region, a.T hook 3. The segment at 322–343 (LEKPQKVRKDKEGTPPLTKEDK) is disordered. N6-acetyllysine is present on Lys-371. A disordered region spans residues 440–590 (RLESTPNSRF…PWLMPPTIPL (151 aa)). A compositionally biased stretch (low complexity) spans 450 to 489 (SATSCGSSEKSSAASQHSSQMSSDSSRSSSPSIDTTSDSQ). Ser-516 carries the post-translational modification Phosphoserine. Residues 544-557 (LPTLQSAPQQQTSS) are compositionally biased toward low complexity. Pro residues predominate over residues 558-571 (SPPPPLLTPPPPLQ). Lys-634 carries the N6-acetyllysine modification. Ser-678 is modified (phosphoserine). Disordered regions lie at residues 711-943 (ESVT…ADVA), 963-1003 (RGNL…TSSI), 1034-1064 (IEKS…RGPR), and 1101-1161 (ILSS…CQVP). Low complexity-rich tracts occupy residues 717-730 (SNRT…SGVS) and 760-790 (LSTS…ASAL). Composition is skewed to polar residues over residues 791-806 (NPTF…QSGE) and 817-830 (QTSA…SNSP). The residue at position 837 (Thr-837) is a Phosphothreonine. A compositionally biased stretch (basic and acidic residues) spans 843-887 (EKGRKKDTAPEELSKDRDADKSVEKDKSRERDREREKENKRESRK). Ser-923 carries the post-translational modification Phosphoserine. Low complexity predominate over residues 989-1003 (SAPSSSTVKHSTSSI). Positions 1040–1059 (LKQTDQPKAQGQESDSSETS) are enriched in polar residues. Ser-1053 is subject to Phosphoserine. The segment covering 1101-1111 (ILSSMGNDDKS) has biased composition (basic and acidic residues). Position 1127 is an N6-acetyllysine (Lys-1127). The segment at 1144-1192 (KKGRRSRRCGQCPGCQVPEDCGICTNCLDKPKFGGRNIKKQCCKMRKCQ) adopts a CXXC-type zinc-finger fold. Cys-1152, Cys-1155, Cys-1158, Cys-1164, Cys-1167, Cys-1170, Cys-1186, and Cys-1191 together coordinate Zn(2+). A disordered region spans residues 1196 to 1390 (WMPSKASLQK…PLSNGISSKQ (195 aa)). A compositionally biased stretch (basic and acidic residues) spans 1217–1229 (SKTTEKKESKEST). Low complexity predominate over residues 1230–1241 (AVKSPLEPAQKA). Residue Lys-1232 is modified to N6-acetyllysine. Over residues 1245–1270 (PREEPAPKKSSSEPPPRKPVEEKSEE) the composition is skewed to basic and acidic residues. The span at 1369–1390 (KQENAGTLNILNPLSNGISSKQ) shows a compositional bias: polar residues. 3 consecutive PHD-type zinc fingers follow at residues 1430–1481 (RVVC…CKFC), 1478–1532 (CKFC…CVRC), and 1565–1629 (GNFC…CTER). Residues 1583-1599 (KMMQCGKCDRWVHSKCE) are interaction with histone H3K4me3. The 131-residue stretch at 1637-1767 (ALEKELQASL…SFFIRQMERV (131 aa)) folds into the Bromo domain. Disordered regions lie at residues 1665 to 1714 (YRQA…EGVK) and 1807 to 1870 (WQER…PGID). Residues 1828–1849 (APKPKGPGEPDSPTPLHPPTPP) show a composition bias toward pro residues. Ser-1839 carries the post-translational modification Phosphoserine. Residue Thr-1847 is modified to Phosphothreonine. The residue at position 1860 (Ser-1860) is a Phosphoserine. Residues 1872–1912 (NRQCALCLMYGDDSANDAGRLLYIGQNEWTHVNCALWSAEV) form a C2HC pre-PHD-type zinc finger. The PHD-type 4 zinc finger occupies 1933–1980 (LRCEFCQKPGATVGCCLTSCTSNYHFMCSRAKNCVFLDDKKVYCQRHR). One can recognise an FYR N-terminal domain in the interval 2020 to 2076 (NIHMMIGSMTIDCLGILNDLSDCEDKLFPIGYQCSRVYWSTTDARKRCVYTCKIMEC). Position 2100 is a phosphoserine (Ser-2100). Residues 2147–2174 (RTPSYSPTQRSPGCRPLPSAGSPTPTTH) form a disordered region. The residue at position 2148 (Thr-2148) is a Phosphothreonine. A phosphoserine mark is found at Ser-2152 and Ser-2202. Disordered stretches follow at residues 2214-2339 (VRTG…ATPG), 2371-2619 (RGQR…SARA), 2639-2673 (EDIP…SDED), and 2709-2759 (KISQ…DAGE). A compositionally biased stretch (low complexity) spans 2218–2230 (SAYSRSSVSSVPS). Composition is skewed to polar residues over residues 2250–2284 (LSSS…SSPS) and 2308–2320 (TSSS…SAHS). Composition is skewed to basic and acidic residues over residues 2411 to 2422 (ILHEHIGSSSRD) and 2430 to 2440 (SSKETCKEKHS). Over residues 2498 to 2509 (GQSTQVEGSSKE) the composition is skewed to polar residues. A Glycyl lysine isopeptide (Lys-Gly) (interchain with G-Cter in SUMO2) cross-link involves residue Lys-2524. The segment covering 2528-2537 (ENQSKNTQKE) has biased composition (polar residues). The residue at position 2560 (Ser-2560) is a Phosphoserine. The segment covering 2569 to 2588 (PSPNNTLSQDPQSNNYQNLP) has biased composition (polar residues). Phosphoserine is present on Ser-2607. Basic residues predominate over residues 2609–2618 (KRRYPRRSAR). Acidic residues predominate over residues 2663–2673 (GADDLSTSDED). Positions 2722 to 2737 (SDTSVTATSRKSSQIP) are enriched in polar residues. Residues 2740-2759 (NGKENGTENLKIDRPEDAGE) show a composition bias toward basic and acidic residues. Ser-2792 carries the post-translational modification Phosphoserine. Residues 2843–2851 (SDIMDFVLK) carry the 9aaTAD motif. The residue at position 2951 (Ser-2951) is a Phosphoserine. Lys-2954 bears the N6-acetyllysine mark. 2 disordered regions span residues 2958–3060 (ITEK…NAAV) and 3164–3239 (AAQS…PSNI). Residues 3012-3025 (HGNSQDLTRNSGTP) are compositionally biased toward polar residues. Ser-3032 carries the post-translational modification Phosphoserine. Polar residues predominate over residues 3035–3060 (VPVQNQKYVPSSTDSPGPSQISNAAV). The span at 3167 to 3178 (SSFPPNISSPPS) shows a compositional bias: low complexity. Positions 3196–3212 (EANQRTDLTTTVATPSS) are enriched in polar residues. The segment covering 3214-3229 (LKKRPISRLHTRKNKK) has biased composition (basic residues). Thr-3369 carries the phosphothreonine modification. The residue at position 3459 (Lys-3459) is an N6-acetyllysine. Residues 3462-3640 (TLTSQRDRDP…AMEEEESGFS (179 aa)) are disordered. Over residues 3475–3487 (PGTQPSNFTQTAE) the composition is skewed to polar residues. Positions 3501–3528 (PSAKPASSASPGSSPSSGQQSGSSSVPG) are enriched in low complexity. Ser-3510 and Ser-3523 each carry phosphoserine. A compositionally biased stretch (basic and acidic residues) spans 3558–3570 (TSSEAHIPHRDTD). An FYR C-terminal domain is found at 3663 to 3744 (KKGLVFEISS…KHCRNYKFRF (82 aa)). The WDR5 interaction motif (WIN) motif lies at 3759-3764 (GSARAE). The disordered stretch occupies residues 3782-3805 (HRQPPEYNPNDEEEEEVQLKSARR). In terms of domain architecture, SET spans 3826–3942 (EAVGVYRSPI…RGEELTYDYK (117 aa)). The S-adenosyl-L-methionine site is built by His-3836 and Arg-3838. Cys-3879 carries the S-methylcysteine; by autocatalysis modification. Residues Tyr-3880 and 3903-3904 (NH) each bind S-adenosyl-L-methionine. Zn(2+)-binding residues include Cys-3906 and Cys-3954. One can recognise a Post-SET domain in the interval 3950 to 3966 (NKLPCNCGAKKCRKFLN). Asn-3955 contacts S-adenosyl-L-methionine. Residues Cys-3956 and Cys-3961 each coordinate Zn(2+).

The protein belongs to the class V-like SAM-binding methyltransferase superfamily. Histone-lysine methyltransferase family. TRX/MLL subfamily. MLL cleavage product N320 heterodimerizes with MLL cleavage product C180 (via SET and FYRC domains). Component of some MLL1/MLL complex, at least composed of the core components KMT2A/MLL1, ASH2L, HCFC1/HCF1, HCFC2, WDR5, DPY30 and RBBP5, as well as the facultative components BACC1, CHD8, E2F6, HSP70, INO80C, KANSL1, LAS1L, MAX, MCRS1, MEN1, MGA, KAT8/MOF, PELP1, PHF20, PRP31, RING2, RUVB1/TIP49A, RUVB2/TIP49B, SENP3, TAF1, TAF4, TAF6, TAF7, TAF9 and TEX10. Interacts (via WIN motif) with WDR5; the interaction is direct. Interaction with WDR5 is required for stable interaction with ASH2L and RBBP5, and thereby also for optimal histone methyltransferase activity. Interacts with KAT8/MOF; the interaction is direct. Interacts with SBF1 and PPP1R15A. Interacts with ZNF335. Interacts with CLOCK and BMAL1 in a circadian manner. Interacts with PPIE; this results in decreased histone H3 methyltransferase activity. Interacts with CREBBP. Interacts with the WRAD complex composed of WDR5, RBBP5, ASH2L and DPY30. Interacts (via MBM motif) with MEN1. Interacts (via IBM motifs) with PSIP1 (via IBD domain) with moderate affinity whereas the KMT2A-MEN1 complex interacts with a greater affinity; MEN1 enhances interaction of KMT2A with PSIP1. Phosphorylation increases its affinity for PSIP1. Forms a complex with CREBBP and CREB1. Proteolytic cleavage by TASP1 generates MLL cleavage 3product N320 and MLL cleavage product C180, which reassemble through a non-covalent association. 2 cleavage sites exist, cleavage site 1 (CS1) and cleavage site 2 (CS2), to generate MLL cleavage products N320 and C180. CS2 is the major site. Post-translationally, phosphorylation increases its interaction with PSIP1. In terms of processing, auto-methylated at Cys-3879: auto-methylation is inhibited by the WRAD complex and unmodified histone H3.

The protein localises to the nucleus. The catalysed reaction is L-lysyl(4)-[histone H3] + S-adenosyl-L-methionine = N(6)-methyl-L-lysyl(4)-[histone H3] + S-adenosyl-L-homocysteine + H(+). It carries out the reaction N(6)-methyl-L-lysyl(4)-[histone H3] + S-adenosyl-L-methionine = N(6),N(6)-dimethyl-L-lysyl(4)-[histone H3] + S-adenosyl-L-homocysteine + H(+). The enzyme catalyses L-cysteinyl-[protein] + S-adenosyl-L-methionine = S-methyl-L-cysteinyl-[protein] + S-adenosyl-L-homocysteine + H(+). In terms of biological role, histone methyltransferase that plays an essential role in early development and hematopoiesis. Catalytic subunit of the MLL1/MLL complex, a multiprotein complex that mediates both methylation of 'Lys-4' of histone H3 (H3K4me) complex and acetylation of 'Lys-16' of histone H4 (H4K16ac). Catalyzes methyl group transfer from S-adenosyl-L-methionine to the epsilon-amino group of 'Lys-4' of histone H3 (H3K4) via a non-processive mechanism. Part of chromatin remodeling machinery predominantly forms H3K4me1 and H3K4me2 methylation marks at active chromatin sites where transcription and DNA repair take place. Has weak methyltransferase activity by itself, and requires other component of the MLL1/MLL complex to obtain full methyltransferase activity. Has no activity toward histone H3 phosphorylated on 'Thr-3', less activity toward H3 dimethylated on 'Arg-8' or 'Lys-9', while it has higher activity toward H3 acetylated on 'Lys-9'. Binds to unmethylated CpG elements in the promoter of target genes and helps maintain them in the nonmethylated state. Required for transcriptional activation of HOXA9. Promotes PPP1R15A-induced apoptosis. Plays a critical role in the control of circadian gene expression and is essential for the transcriptional activation mediated by the CLOCK-BMAL1 heterodimer. Establishes a permissive chromatin state for circadian transcription by mediating a rhythmic methylation of 'Lys-4' of histone H3 (H3K4me) and this histone modification directs the circadian acetylation at H3K9 and H3K14 allowing the recruitment of CLOCK-BMAL1 to chromatin. Also has auto-methylation activity on Cys-3879 in absence of histone H3 substrate. The polypeptide is Histone-lysine N-methyltransferase 2A (Kmt2a) (Mus musculus (Mouse)).